Reading from the N-terminus, the 386-residue chain is CUE domain-containing protein 1 (386 aa).

The span at 1-10 shows a compositional bias: low complexity; the sequence is MTSLFRRSSS. The segment at 1-40 is disordered; it reads MTSLFRRSSSGSGGGGTAGARGGGGGTAAPQELNNSRPAR. Gly residues predominate over residues 11-27; the sequence is GSGGGGTAGARGGGGGT. The 44-residue stretch at 46–89 folds into the CUE domain; the sequence is EFNQAMDDFKTMFPNMDYDIIECVLRANSGAVDATIDQLLQMNL. Disordered regions lie at residues 147–172, 195–225, and 367–386; these read LAPP…RYRN, SIQG…DQES, and DFRG…REGQ. Gly residues predominate over residues 199 to 209; sequence NAGGPKPGSGE.

This is CUE domain-containing protein 1 (CUEDC1) from Homo sapiens (Human).